The sequence spans 404 residues: Probable cysteine protease atg4 (404 aa).

The active-site Nucleophile is cysteine 133. Residues aspartate 307 and histidine 309 contribute to the active site.

The protein belongs to the peptidase C54 family.

Its subcellular location is the cytoplasm. The protein resides in the nucleus. It localises to the preautophagosomal structure. The catalysed reaction is [protein]-C-terminal L-amino acid-glycyl-phosphatidylethanolamide + H2O = [protein]-C-terminal L-amino acid-glycine + a 1,2-diacyl-sn-glycero-3-phosphoethanolamine. Functionally, cysteine protease that plays a key role in cytoplasm to vacuole transport (Cvt) and autophagy by mediating both proteolytic activation and delipidation of ATG8. Required for selective autophagic degradation of the nucleus (nucleophagy) as well as for mitophagy which contributes to regulate mitochondrial quantity and quality by eliminating the mitochondria to a basal level to fulfill cellular energy requirements and preventing excess ROS production. The protease activity is required for proteolytic activation of ATG8: cleaves the C-terminal amino acid of ATG8 to reveal a C-terminal glycine. ATG8 ubiquitin-like activity requires the exposure of the glycine at the C-terminus for its conjugation to phosphatidylethanolamine (PE) and its insertion to membranes, which is necessary for autophagy. The ATG8-PE conjugate mediates tethering between adjacent membranes and stimulates membrane hemifusion, leading to expansion of the autophagosomal membrane during autophagy. In addition to the protease activity, also catalyzes deconjugation of PE-conjugated forms of ATG8 during macroautophagy: ATG8 delipidation is required to release the protein from membranes, which facilitates multiple events during macroautophagy, and especially for efficient autophagosome biogenesis, the assembly of ATG9-containing tubulovesicular clusters into phagophores/autophagosomes, and for the disassembly of PAS-associated ATG components. ATG8 delipidation by ATG4 also recycles ATG8-PE generated on inappropriate membranes to maintain a reservoir of unlipidated ATG8 that is required for autophagosome formation at the PAS. In Aspergillus niger (strain ATCC MYA-4892 / CBS 513.88 / FGSC A1513), this protein is Probable cysteine protease atg4 (atg4).